Reading from the N-terminus, the 115-residue chain is Evasin P1182 (115 aa).

The first 26 residues, 1–26, serve as a signal peptide directing secretion; it reads MALNWSFRVIFVSTMWCALLKFATLG. Cystine bridges form between cysteine 38–cysteine 58, cysteine 54–cysteine 94, cysteine 70–cysteine 99, and cysteine 89–cysteine 108. Residues asparagine 45, asparagine 72, and asparagine 103 are each glycosylated (N-linked (GlcNAc...) asparagine).

It localises to the secreted. Salivary chemokine-binding protein which binds to host chemokines CCL2, CCL3, CCL4, CCL8 and CCL18. The chain is Evasin P1182 from Amblyomma maculatum (Gulf Coast tick).